The sequence spans 295 residues: Nitrogenase iron protein 1 (295 aa).

An ATP-binding site is contributed by 12–19 (GKGGIGKS). A [4Fe-4S] cluster-binding site is contributed by cysteine 100. Arginine 103 bears the ADP-ribosylarginine; by dinitrogenase reductase ADP-ribosyltransferase mark. Residue cysteine 134 participates in [4Fe-4S] cluster binding.

This sequence belongs to the NifH/BchL/ChlL family. In terms of assembly, homodimer. It depends on [4Fe-4S] cluster as a cofactor. In terms of processing, the reversible ADP-ribosylation of Arg-103 inactivates the nitrogenase reductase and regulates nitrogenase activity.

The catalysed reaction is N2 + 8 reduced [2Fe-2S]-[ferredoxin] + 16 ATP + 16 H2O = H2 + 8 oxidized [2Fe-2S]-[ferredoxin] + 2 NH4(+) + 16 ADP + 16 phosphate + 6 H(+). In terms of biological role, the key enzymatic reactions in nitrogen fixation are catalyzed by the nitrogenase complex, which has 2 components: the iron protein and the molybdenum-iron protein. This chain is Nitrogenase iron protein 1 (nifH1), found in Mastigocladus laminosus (Fischerella sp.).